Here is a 179-residue protein sequence, read N- to C-terminus: MARLREFYKETVVPELVKQFGYKSVMEVPRIEKITLNMGVGEAIADKKVMEHAVSDLEKIAGQKPVVTVARKSIAGFKIRDNYPVGCKVTLRRDQMFEFLDRLITIALPRVRDFRGVSGKSFDGRGNYNMGVREQIIFPEIEYDKIDALRGLNITITTTAKTDEEAKALLSLFKFPFKG.

It belongs to the universal ribosomal protein uL5 family. In terms of assembly, part of the 50S ribosomal subunit; part of the 5S rRNA/L5/L18/L25 subcomplex. Contacts the 5S rRNA and the P site tRNA. Forms a bridge to the 30S subunit in the 70S ribosome.

Its function is as follows. This is one of the proteins that bind and probably mediate the attachment of the 5S RNA into the large ribosomal subunit, where it forms part of the central protuberance. In the 70S ribosome it contacts protein S13 of the 30S subunit (bridge B1b), connecting the 2 subunits; this bridge is implicated in subunit movement. Contacts the P site tRNA; the 5S rRNA and some of its associated proteins might help stabilize positioning of ribosome-bound tRNAs. The protein is Large ribosomal subunit protein uL5 of Neisseria meningitidis serogroup A / serotype 4A (strain DSM 15465 / Z2491).